The chain runs to 669 residues: UvrABC system protein B (669 aa).

The 388-residue stretch at Glu-27 to Arg-414 folds into the Helicase ATP-binding domain. An ATP-binding site is contributed by Gly-40–Thr-47. The short motif at Tyr-93–Ile-116 is the Beta-hairpin element. A Helicase C-terminal domain is found at Gln-431–Ile-597. One can recognise a UVR domain in the interval Pro-628 to Arg-663.

The protein belongs to the UvrB family. Forms a heterotetramer with UvrA during the search for lesions. Interacts with UvrC in an incision complex.

It is found in the cytoplasm. The UvrABC repair system catalyzes the recognition and processing of DNA lesions. A damage recognition complex composed of 2 UvrA and 2 UvrB subunits scans DNA for abnormalities. Upon binding of the UvrA(2)B(2) complex to a putative damaged site, the DNA wraps around one UvrB monomer. DNA wrap is dependent on ATP binding by UvrB and probably causes local melting of the DNA helix, facilitating insertion of UvrB beta-hairpin between the DNA strands. Then UvrB probes one DNA strand for the presence of a lesion. If a lesion is found the UvrA subunits dissociate and the UvrB-DNA preincision complex is formed. This complex is subsequently bound by UvrC and the second UvrB is released. If no lesion is found, the DNA wraps around the other UvrB subunit that will check the other stand for damage. This Synechocystis sp. (strain ATCC 27184 / PCC 6803 / Kazusa) protein is UvrABC system protein B.